A 109-amino-acid chain; its full sequence is Spermidine export protein MdtI (109 aa).

A run of 4 helical transmembrane segments spans residues 6–26 (WVHA…NVFL), 36–56 (IFGL…SQAV), 64–84 (AYAL…WILF), and 88–108 (LNRK…MVKL).

The protein belongs to the drug/metabolite transporter (DMT) superfamily. Small multidrug resistance (SMR) (TC 2.A.7.1) family. MdtI subfamily. As to quaternary structure, forms a complex with MdtJ.

It is found in the cell inner membrane. Catalyzes the excretion of spermidine. This chain is Spermidine export protein MdtI, found in Escherichia coli O81 (strain ED1a).